A 701-amino-acid chain; its full sequence is Polyribonucleotide nucleotidyltransferase (701 aa).

Positions 483 and 489 each coordinate Mg(2+). The KH domain maps to 550 to 609; it reads PRIYTLHIPTDKIRDVIGPGGKVIRGIIEQTGVKIDVEDDGTIHVASADEASANKAIQII. The S1 motif domain maps to 619-686; it reads GKTYLGKVVR…EGNKIKLSRK (68 aa).

The protein belongs to the polyribonucleotide nucleotidyltransferase family. Mg(2+) is required as a cofactor.

It is found in the cytoplasm. The enzyme catalyses RNA(n+1) + phosphate = RNA(n) + a ribonucleoside 5'-diphosphate. In terms of biological role, involved in mRNA degradation. Catalyzes the phosphorolysis of single-stranded polyribonucleotides processively in the 3'- to 5'-direction. The sequence is that of Polyribonucleotide nucleotidyltransferase from Solibacter usitatus (strain Ellin6076).